The chain runs to 593 residues: Mitoguardin 2 (593 aa).

Helical transmembrane passes span 11-31 (MIQA…TTFG) and 42-62 (PGLR…ALAA). 2 disordered regions span residues 103–141 (GYSS…VASM) and 196–231 (SVGQ…SQRK). Low complexity-rich tracts occupy residues 106-116 (SRRVQSPSSKS) and 123-141 (ISSI…VASM). Residue Ser132 is modified to Phosphoserine. Thr206 carries the phosphothreonine modification. Phosphoserine is present on residues Ser220, Ser224, and Ser228. At Thr273 the chain carries Phosphothreonine. A phosphoserine mark is found at Ser276 and Ser295. The FFAT motif lies at 292–298 (SFFSATE).

It belongs to the mitoguardin family. In terms of assembly, homodimer and heterodimer; forms heterodimers with MIGA1. Interacts with PLD6/MitoPLD. Interacts (via phosphorylated FFAT motif) with MOSPD2, VAPA and VAPB. In terms of processing, phosphorylation at Ser-295 of the FFAT motif activates interaction with MOSPD2, VAPA and VAPB.

The protein resides in the mitochondrion outer membrane. Its function is as follows. Regulator of mitochondrial fusion: acts by forming homo- and heterodimers at the mitochondrial outer membrane and facilitating the formation of PLD6/MitoPLD dimers. May act by regulating phospholipid metabolism via PLD6/MitoPLD. The sequence is that of Mitoguardin 2 from Homo sapiens (Human).